Here is a 530-residue protein sequence, read N- to C-terminus: Tegument protein UL21 homolog (530 aa).

The protein belongs to the alphaherpesvirinae UL21 protein family. Interacts (via C-terminus) with UL16.

It localises to the virion tegument. The protein localises to the host cytoplasm. Its subcellular location is the host nucleus. Functionally, may participate in DNA packaging/capsid maturation events. Promotes efficient incorporation of tegument proteins UL46, UL49, and US3 homologs into virions. May also play a role in capsid transport to the trans-Golgi network (TGN). In Equus caballus (Horse), this protein is Tegument protein UL21 homolog.